The chain runs to 246 residues: Receptor-transporting protein 4 (246 aa).

The Cytoplasmic segment spans residues 1-224; it reads MVVDFWTWEQ…EKLGPSRDPD (224 aa). The segment at 48-159 adopts a 3CxxC-type zinc-finger fold; that stretch reads RAFGWFRCSS…DTANCEACTL (112 aa). Residues 225–245 form a helical membrane-spanning segment; that stretch reads PLNICVFILLLVFIVVKCFTS.

It belongs to the TMEM7 family. Interacts with TASR16. Interacts with OPRD1 and OPRM1; the interaction promotes cell surface localization of the OPDR1-OPRM1 heterodimer. In terms of assembly, (Microbial infection) Interacts with influenza A virus protein NS1; this interaction sequesters NS1 from interacting with RIG-I/DDX58 to restore antiviral signaling. In terms of tissue distribution, expressed in circumvallate papillae and testis.

The protein resides in the membrane. The protein localises to the cytoplasm. Chaperone protein that facilitates the trafficking and functional cell surface expression of some G-protein coupled receptors (GPCRs). Promotes functional expression of the bitter taste receptor TAS2R16. Also promotes functional expression of the opioid receptor heterodimer OPRD1-OPRM1. In addition, acts as a potent IFN-inducible suppressor of pathogens including lyssavirus rabies, influenza A or yellow fever virus. Mechanistically, associates with the viral replicase, binds viral RNA, and thereby suppresses viral genome amplification that replicates at the endoplasmic reticulum. In addition, restores antiviral signaling by interacting with and sequestering influenza A virus protein NS1. This is Receptor-transporting protein 4 (RTP4) from Homo sapiens (Human).